Reading from the N-terminus, the 517-residue chain is MIEVVVGIGAGLIGIGAGYLVAKKINDANYSIFLEQAKAKAKAIEFEAESILKDAKVKVNEAEFEAKKRYEEKGSRLQKEYNQKLDDISKKEHAILNEQEILKNSKDELEKSQNQAKTLYEEGLNLKIAYQDKLSETLKVLEHVAGLTEDEAKNMVLRKVEEKSRAEIAHIVRKYEEEAKKEAKKRANYILAQATSRYAGEFAAERLINVVNIKNDELKGRIIGKEGRNIKTLEMVLGVDVIIDDTPHAIILSSFNLYRRAIATRVIELLVEDGRIQPARIEEIHKKVCDEFEASILEEGENILIDLGISKVHPEIVKLIGKLKFRASYGQNALAHSLEVAHLSGIIAAETGGDEKLAKRAGILHDIGKALTHEYEGSHVDLGAEICKRYKEHPVVINAIYAHHGHEEALSVECAAVCAADALSAARPGARREVLESFLKRVEEIESIAISKEGIKGAYAINAGREIRVIANAKLVNDDEAVLLAKEIAEEIQDKIQYPGEIKVNVIRELRAIEFAK.

A helical transmembrane segment spans residues 1–21 (MIEVVVGIGAGLIGIGAGYLV). The KH domain occupies 207 to 273 (LINVVNIKND…TRVIELLVED (67 aa)). In terms of domain architecture, HD spans 333–426 (ALAHSLEVAH…VCAADALSAA (94 aa)).

It belongs to the RNase Y family.

The protein resides in the cell membrane. In terms of biological role, endoribonuclease that initiates mRNA decay. This chain is Ribonuclease Y, found in Campylobacter fetus subsp. fetus (strain 82-40).